We begin with the raw amino-acid sequence, 92 residues long: Islet amyloid polypeptide (92 aa).

A signal peptide spans 1–22; it reads MHISKLPAALLIFSVALNHLKA. Residues 23 to 34 constitute a propeptide that is removed on maturation; the sequence is TPVRSGTNHQMD. The cysteines at positions 38 and 43 are disulfide-linked. Residue tyrosine 73 is modified to Tyrosine amide. The propeptide occupies 77–92; that stretch reads SAAEIPDGDSLDLFLL.

The protein belongs to the calcitonin family. In terms of assembly, can form homodimers. Interacts with IDE and INS. Interaction with INS inhibits homodimerization and fibril formation.

Its subcellular location is the secreted. Amylin/IAPP is a glucoregulatory peptide hormone that plays an important role in the regulation of energy homeostasis. Selectively inhibits insulin-stimulated glucose utilization and glycogen deposition in muscle, while not affecting adipocyte glucose metabolism. IAPP function is mediated by the CALCR-RAMPs (AMYRs) receptor complexes. Amylin can also bind CALCR receptor in the absence of RAMPs, although it is more selective for AMYRs. The chain is Islet amyloid polypeptide (IAPP) from Mesocricetus auratus (Golden hamster).